The primary structure comprises 977 residues: Synaptonemal complex protein 2-like (977 aa).

4 disordered regions span residues 447-474, 574-593, 642-728, and 804-824; these read LGSQTSEHSSTTKTSSANRSVQKSLSNA, QSTERATPASRYRASMNSPL, RNKS…QDIM, and TEKNVNRSAADSEDSEDVFYS. Positions 449-462 are enriched in low complexity; that stretch reads SQTSEHSSTTKTSS. Polar residues predominate over residues 463-474; it reads ANRSVQKSLSNA. The span at 674 to 693 shows a compositional bias: basic and acidic residues; sequence SRKEMHRPEDINPKSPHSAE.

This sequence belongs to the SYCP2 family. Ubiquitinated and gradually degraded by the proteasome during oocyte maturation. Post-translationally, phosphorylated in maturing oocytes, before its degradation. As to expression, expressed in immature oocytes (at protein level). Expressed in the ovary.

It localises to the nucleus. The protein localises to the chromosome. The protein resides in the centromere. It is found in the nucleolus. In terms of biological role, oocyte-specific protein that localizes to centromeres at the dictyate stage and regulates the survival of primordial oocytes. In Xenopus laevis (African clawed frog), this protein is Synaptonemal complex protein 2-like (sycp2l).